The primary structure comprises 365 residues: 3-isopropylmalate dehydrogenase (365 aa).

78 to 91 (GYKWDSLPRSQRPE) provides a ligand contact to NAD(+). R98, R108, R136, and D226 together coordinate substrate. Mg(2+)-binding residues include D226, D250, and D254. 284–296 (GSAPDIAGQDKAN) contributes to the NAD(+) binding site.

Belongs to the isocitrate and isopropylmalate dehydrogenases family. LeuB type 1 subfamily. As to quaternary structure, homodimer. Mg(2+) serves as cofactor. Requires Mn(2+) as cofactor.

The protein resides in the cytoplasm. It carries out the reaction (2R,3S)-3-isopropylmalate + NAD(+) = 4-methyl-2-oxopentanoate + CO2 + NADH. It participates in amino-acid biosynthesis; L-leucine biosynthesis; L-leucine from 3-methyl-2-oxobutanoate: step 3/4. Functionally, catalyzes the oxidation of 3-carboxy-2-hydroxy-4-methylpentanoate (3-isopropylmalate) to 3-carboxy-4-methyl-2-oxopentanoate. The product decarboxylates to 4-methyl-2 oxopentanoate. This chain is 3-isopropylmalate dehydrogenase, found in Synechococcus elongatus (strain ATCC 33912 / PCC 7942 / FACHB-805) (Anacystis nidulans R2).